We begin with the raw amino-acid sequence, 398 residues long: Mu-type opioid receptor (398 aa).

The Extracellular portion of the chain corresponds to Met-1–Val-66. Residues Asn-9, Asn-31, Asn-38, Asn-46, and Asn-53 are each glycosylated (N-linked (GlcNAc...) asparagine). A helical membrane pass occupies residues Thr-67–Tyr-91. The Cytoplasmic portion of the chain corresponds to Val-92–Asn-104. The helical transmembrane segment at Ile-105–Leu-129 threads the bilayer. At Met-130–Cys-140 the chain is on the extracellular side. A disulfide bridge connects residues Cys-140 and Cys-217. Residues Lys-141 to Val-163 form a helical membrane-spanning segment. Residues Asp-164–Asn-183 are Cytoplasmic-facing. The residue at position 166 (Tyr-166) is a Phosphotyrosine. The helical transmembrane segment at Ala-184–Met-205 threads the bilayer. At Ala-206–Trp-228 the chain is on the extracellular side. The chain crosses the membrane as a helical span at residues Glu-229–Gly-253. The Cytoplasmic portion of the chain corresponds to Leu-254–Arg-277. The helical transmembrane segment at Ile-278 to Ala-304 threads the bilayer. Residues Leu-305–Thr-312 are Extracellular-facing. A helical membrane pass occupies residues Phe-313–Tyr-336. An NPxxY; plays a role in stabilizing the activated conformation of the receptor motif is present at residues Asn-332–Tyr-336. The Cytoplasmic segment spans residues Ala-337–Pro-398. Residue Cys-351 is the site of S-palmitoyl cysteine attachment. The interval Gln-361 to His-385 is disordered. Ser-363 is modified (phosphoserine). A Phosphothreonine modification is found at Thr-370. Ser-375 carries the post-translational modification Phosphoserine. Position 394 is a phosphothreonine (Thr-394).

The protein belongs to the G-protein coupled receptor 1 family. Forms homooligomers and heterooligomers with other GPCRs, such as OPRD1, OPRK1, OPRL1, NPFFR2, ADRA2A, SSTR2, CNR1 and CCR5 (probably in dimeric forms). Interacts with heterotrimeric G proteins; interaction with a heterotrimeric complex containing GNAI1, GNB1 and GNG2 stabilizes the active conformation of the receptor and increases its affinity for endomorphin-2, the synthetic opioid peptide DAMGO and for morphinan agonists. Interacts with PPL; the interaction disrupts agonist-mediated G-protein activation. Interacts (via C-terminus) with DNAJB4 (via C-terminus). Interacts with calmodulin; the interaction inhibits the constitutive activity of OPRM1; it abolishes basal and attenuates agonist-stimulated G-protein coupling. Interacts with FLNA, PLD2, RANBP9 and WLS and GPM6A. Interacts with RTP4. Interacts with SYP and GNAS. Interacts with RGS9, RGS17, RGS20, RGS4, PPP1R9B and HINT1. Phosphorylated. Differentially phosphorylated in basal and agonist-induced conditions. Agonist-mediated phosphorylation modulates receptor internalization. Phosphorylated by GRK2 in a agonist-dependent manner. Phosphorylation at Tyr-166 requires receptor activation, is dependent on non-receptor protein tyrosine kinase Src and results in a decrease in agonist efficacy by reducing G-protein coupling efficiency. Phosphorylated on tyrosine residues; the phosphorylation is involved in agonist-induced G-protein-independent receptor down-regulation. Phosphorylation at Ser-375 is involved in G-protein-dependent but not beta-arrestin-dependent activation of the ERK pathway. Post-translationally, ubiquitinated. A basal ubiquitination seems not to be related to degradation. Ubiquitination is increased upon formation of OPRM1:OPRD1 oligomers leading to proteasomal degradation; the ubiquitination is diminished by RTP4. In terms of tissue distribution, brain. Is expressed in the cerebral cortex, caudate putamen, nucleus accumbens, septal nuclei, thalamus, hippocampus, and habenula. Not detected in cerebellum.

It is found in the cell membrane. Its subcellular location is the cell projection. The protein localises to the axon. It localises to the perikaryon. The protein resides in the dendrite. It is found in the endosome. Its function is as follows. Receptor for endogenous opioids such as beta-endorphin and endomorphin. Receptor for natural and synthetic opioids including morphine, heroin, DAMGO, fentanyl, etorphine, buprenorphin and methadone. Also activated by enkephalin peptides, such as Met-enkephalin or Met-enkephalin-Arg-Phe, with higher affinity for Met-enkephalin-Arg-Phe. Agonist binding to the receptor induces coupling to an inactive GDP-bound heterotrimeric G-protein complex and subsequent exchange of GDP for GTP in the G-protein alpha subunit leading to dissociation of the G-protein complex with the free GTP-bound G-protein alpha and the G-protein beta-gamma dimer activating downstream cellular effectors. The agonist- and cell type-specific activity is predominantly coupled to pertussis toxin-sensitive G(i) and G(o) G alpha proteins, GNAI1, GNAI2, GNAI3 and GNAO1 isoforms Alpha-1 and Alpha-2, and to a lesser extent to pertussis toxin-insensitive G alpha proteins GNAZ and GNA15. They mediate an array of downstream cellular responses, including inhibition of adenylate cyclase activity and both N-type and L-type calcium channels, activation of inward rectifying potassium channels, mitogen-activated protein kinase (MAPK), phospholipase C (PLC), phosphoinositide/protein kinase (PKC), phosphoinositide 3-kinase (PI3K) and regulation of NF-kappa-B. Also couples to adenylate cyclase stimulatory G alpha proteins. The selective temporal coupling to G-proteins and subsequent signaling can be regulated by RGSZ proteins, such as RGS9, RGS17 and RGS4. Phosphorylation by members of the GPRK subfamily of Ser/Thr protein kinases and association with beta-arrestins is involved in short-term receptor desensitization. Beta-arrestins associate with the GPRK-phosphorylated receptor and uncouple it from the G-protein thus terminating signal transduction. The phosphorylated receptor is internalized through endocytosis via clathrin-coated pits which involves beta-arrestins. The activation of the ERK pathway occurs either in a G-protein-dependent or a beta-arrestin-dependent manner and is regulated by agonist-specific receptor phosphorylation. Acts as a class A G-protein coupled receptor (GPCR) which dissociates from beta-arrestin at or near the plasma membrane and undergoes rapid recycling. Receptor down-regulation pathways are varying with the agonist and occur dependent or independent of G-protein coupling. Endogenous ligands induce rapid desensitization, endocytosis and recycling. Heterooligomerization with other GPCRs can modulate agonist binding, signaling and trafficking properties. This Rattus norvegicus (Rat) protein is Mu-type opioid receptor (Oprm1).